Consider the following 309-residue polypeptide: Ferrochelatase (309 aa).

Residues H185 and E262 each coordinate Fe cation.

This sequence belongs to the ferrochelatase family.

Its subcellular location is the cytoplasm. It catalyses the reaction heme b + 2 H(+) = protoporphyrin IX + Fe(2+). Its pathway is porphyrin-containing compound metabolism; protoheme biosynthesis; protoheme from protoporphyrin-IX: step 1/1. Its function is as follows. Catalyzes the ferrous insertion into protoporphyrin IX. The sequence is that of Ferrochelatase from Campylobacter jejuni subsp. jejuni serotype O:23/36 (strain 81-176).